The sequence spans 463 residues: A-type ATP synthase subunit B (463 aa).

This sequence belongs to the ATPase alpha/beta chains family. As to quaternary structure, has multiple subunits with at least A(3), B(3), C, D, E, F, H, I and proteolipid K(x).

The protein resides in the cell membrane. Functionally, component of the A-type ATP synthase that produces ATP from ADP in the presence of a proton gradient across the membrane. The B chain is a regulatory subunit. The chain is A-type ATP synthase subunit B from Thermococcus gammatolerans (strain DSM 15229 / JCM 11827 / EJ3).